We begin with the raw amino-acid sequence, 681 residues long: Probable L-type lectin-domain containing receptor kinase VII.2 (681 aa).

Residues 1-23 (MFSKVSILLFSLASLLLFRSTTG) form the signal peptide. The legume-lectin like stretch occupies residues 24–260 (IEFIYNSNFT…SHRILSWSFS (237 aa)). Residues 24 to 290 (IEFIYNSNFT…SGDSVLKSKG (267 aa)) are Extracellular-facing. N31, N42, N56, N72, N126, N202, N207, N228, and N263 each carry an N-linked (GlcNAc...) asparagine glycan. The chain crosses the membrane as a helical span at residues 291 to 311 (FIAGVSSGVVLLVSVIGLLCF). At 312-681 (YVVRRRRQRL…QTYDSILHGR (370 aa)) the chain is on the cytoplasmic side. Residues 349 to 624 (FSDENMIGYG…VVQILEQGRL (276 aa)) enclose the Protein kinase domain. ATP contacts are provided by residues 355–363 (IGYGGNSKV) and K376. D475 acts as the Proton acceptor in catalysis.

It in the C-terminal section; belongs to the protein kinase superfamily. Ser/Thr protein kinase family. This sequence in the N-terminal section; belongs to the leguminous lectin family.

It localises to the cell membrane. The catalysed reaction is L-seryl-[protein] + ATP = O-phospho-L-seryl-[protein] + ADP + H(+). It carries out the reaction L-threonyl-[protein] + ATP = O-phospho-L-threonyl-[protein] + ADP + H(+). This is Probable L-type lectin-domain containing receptor kinase VII.2 (LECRK72) from Arabidopsis thaliana (Mouse-ear cress).